Reading from the N-terminus, the 97-residue chain is Small ribosomal subunit protein uS19 (97 aa).

A disordered region spans residues 74 to 97 (FSPTRRFGGHPDKKAVKGKIEKQG). Residues 82–97 (GHPDKKAVKGKIEKQG) show a composition bias toward basic and acidic residues.

This sequence belongs to the universal ribosomal protein uS19 family.

In terms of biological role, protein S19 forms a complex with S13 that binds strongly to the 16S ribosomal RNA. The sequence is that of Small ribosomal subunit protein uS19 from Petrotoga mobilis (strain DSM 10674 / SJ95).